Here is a 499-residue protein sequence, read N- to C-terminus: Type-1 glutamine synthetase 1 (499 aa).

Residues 50-146 form the GS beta-grasp domain; that stretch reads PQLKFIRVCW…IFGEFFYLDN (97 aa). The 342-residue stretch at 158 to 499 folds into the GS catalytic domain; it reads PRNSLQRAID…DQILKLLELF (342 aa).

Belongs to the glutamine synthetase family.

The enzyme catalyses L-glutamate + NH4(+) + ATP = L-glutamine + ADP + phosphate + H(+). The polypeptide is Type-1 glutamine synthetase 1 (glnA1) (Dictyostelium discoideum (Social amoeba)).